The following is a 312-amino-acid chain: Glyoxylate/hydroxypyruvate reductase A (312 aa).

Residue Arg227 is part of the active site. The active-site Proton donor is the His275.

Belongs to the D-isomer specific 2-hydroxyacid dehydrogenase family. GhrA subfamily.

Its subcellular location is the cytoplasm. It carries out the reaction glycolate + NADP(+) = glyoxylate + NADPH + H(+). It catalyses the reaction (R)-glycerate + NAD(+) = 3-hydroxypyruvate + NADH + H(+). The enzyme catalyses (R)-glycerate + NADP(+) = 3-hydroxypyruvate + NADPH + H(+). In terms of biological role, catalyzes the NADPH-dependent reduction of glyoxylate and hydroxypyruvate into glycolate and glycerate, respectively. In Escherichia coli O157:H7, this protein is Glyoxylate/hydroxypyruvate reductase A.